A 316-amino-acid chain; its full sequence is MALLDDVKSELAAFEGDSPAAIKAQAAAMIRFGGGLRPVQNTYVIQAVFTSLDVAEWLKNTLRNTFGHEAEINHLTRQTPNGPVETYVVLVTRNVVALALQTGLVDRRKQQVRGLPSEVVNGSIAQIKAAWRGAFMARGFLSDPGKASFLEIACPTEEAAMALCGVARRLGIQAKHRTLRSSERVTLKDPDAIERMLKLMGATRSAREWTGKRSDGEARGKANRLANFDDANMRRSAKAAAEASEKVQHAFEVLGDNIPDNLRQAGQLRIDHVDKSLEELGKIAEPQITKDAIAGRIRRLLQLAEKTEKARAAEGK.

Positions 276-309 form a DNA-binding region, H-T-H motif; it reads SLEELGKIAEPQITKDAIAGRIRRLLQLAEKTEK.

Belongs to the WhiA family.

In terms of biological role, involved in cell division and chromosome segregation. This chain is Probable cell division protein WhiA, found in Bifidobacterium longum subsp. infantis (strain ATCC 15697 / DSM 20088 / JCM 1222 / NCTC 11817 / S12).